The sequence spans 363 residues: 3-isopropylmalate dehydrogenase (363 aa).

Glycine 79–glutamate 92 contributes to the NAD(+) binding site. 4 residues coordinate substrate: arginine 100, arginine 110, arginine 139, and aspartate 228. Residues aspartate 228, aspartate 252, and aspartate 256 each contribute to the Mg(2+) site. Glycine 286–asparagine 298 serves as a coordination point for NAD(+).

The protein belongs to the isocitrate and isopropylmalate dehydrogenases family. LeuB type 1 subfamily. Homodimer. It depends on Mg(2+) as a cofactor. Mn(2+) is required as a cofactor.

The protein resides in the cytoplasm. It catalyses the reaction (2R,3S)-3-isopropylmalate + NAD(+) = 4-methyl-2-oxopentanoate + CO2 + NADH. Its pathway is amino-acid biosynthesis; L-leucine biosynthesis; L-leucine from 3-methyl-2-oxobutanoate: step 3/4. Functionally, catalyzes the oxidation of 3-carboxy-2-hydroxy-4-methylpentanoate (3-isopropylmalate) to 3-carboxy-4-methyl-2-oxopentanoate. The product decarboxylates to 4-methyl-2 oxopentanoate. The chain is 3-isopropylmalate dehydrogenase from Vibrio cholerae serotype O1 (strain ATCC 39315 / El Tor Inaba N16961).